The following is an 899-amino-acid chain: Protein translocase subunit SecA (899 aa).

ATP-binding positions include glutamine 87, 105–109 (GEGKT), and aspartate 516. Positions 884, 886, 895, and 896 each coordinate Zn(2+).

This sequence belongs to the SecA family. In terms of assembly, monomer and homodimer. Part of the essential Sec protein translocation apparatus which comprises SecA, SecYEG and auxiliary proteins SecDF. Other proteins may also be involved. Zn(2+) is required as a cofactor.

Its subcellular location is the cell inner membrane. The protein localises to the cytoplasm. The catalysed reaction is ATP + H2O + cellular proteinSide 1 = ADP + phosphate + cellular proteinSide 2.. Functionally, part of the Sec protein translocase complex. Interacts with the SecYEG preprotein conducting channel. Has a central role in coupling the hydrolysis of ATP to the transfer of proteins into and across the cell membrane, serving as an ATP-driven molecular motor driving the stepwise translocation of polypeptide chains across the membrane. The sequence is that of Protein translocase subunit SecA from Borreliella burgdorferi (strain ZS7) (Borrelia burgdorferi).